Here is a 33-residue protein sequence, read N- to C-terminus: Photosystem II reaction center protein Psb30 (33 aa).

Residues 5–25 (LIVQLTSLILISIAGPIIIAL) traverse the membrane as a helical segment.

It belongs to the Psb30/Ycf12 family. PSII is composed of 1 copy each of membrane proteins PsbA, PsbB, PsbC, PsbD, PsbE, PsbF, PsbH, PsbI, PsbJ, PsbK, PsbL, PsbM, PsbT, PsbY, PsbZ, Psb30/Ycf12, peripheral proteins of the oxygen-evolving complex and a large number of cofactors. It forms dimeric complexes.

Its subcellular location is the plastid. It localises to the chloroplast thylakoid membrane. Its function is as follows. A core subunit of photosystem II (PSII), probably helps stabilize the reaction center. This chain is Photosystem II reaction center protein Psb30, found in Euglena myxocylindracea.